The primary structure comprises 277 residues: Large ribosomal subunit protein uL2 (277 aa).

Residues 219–277 (TVRGSVMNPNDHPHGGGEGKAPVGRKAPSTPWGKPALGLKTRNKKAKSNKLIVRRRNEK) are disordered. Over residues 259 to 277 (TRNKKAKSNKLIVRRRNEK) the composition is skewed to basic residues.

The protein belongs to the universal ribosomal protein uL2 family. As to quaternary structure, part of the 50S ribosomal subunit. Forms a bridge to the 30S subunit in the 70S ribosome.

In terms of biological role, one of the primary rRNA binding proteins. Required for association of the 30S and 50S subunits to form the 70S ribosome, for tRNA binding and peptide bond formation. It has been suggested to have peptidyltransferase activity; this is somewhat controversial. Makes several contacts with the 16S rRNA in the 70S ribosome. This Streptococcus equi subsp. zooepidemicus (strain MGCS10565) protein is Large ribosomal subunit protein uL2.